We begin with the raw amino-acid sequence, 496 residues long: Glycogen synthase (496 aa).

Residue lysine 24 participates in ADP-alpha-D-glucose binding.

It belongs to the glycosyltransferase 1 family. Bacterial/plant glycogen synthase subfamily.

The enzyme catalyses [(1-&gt;4)-alpha-D-glucosyl](n) + ADP-alpha-D-glucose = [(1-&gt;4)-alpha-D-glucosyl](n+1) + ADP + H(+). The protein operates within glycan biosynthesis; glycogen biosynthesis. Synthesizes alpha-1,4-glucan chains using ADP-glucose. This is Glycogen synthase from Nitrosospira multiformis (strain ATCC 25196 / NCIMB 11849 / C 71).